Here is a 535-residue protein sequence, read N- to C-terminus: ABC1 family protein C10F6.14c (535 aa).

This sequence belongs to the protein kinase superfamily. ADCK protein kinase family.

The polypeptide is ABC1 family protein C10F6.14c (Schizosaccharomyces pombe (strain 972 / ATCC 24843) (Fission yeast)).